The following is a 462-amino-acid chain: UDP-N-acetylmuramate--L-alanine ligase (462 aa).

Residue 114–120 (GSHGKTT) participates in ATP binding.

Belongs to the MurCDEF family.

It localises to the cytoplasm. The catalysed reaction is UDP-N-acetyl-alpha-D-muramate + L-alanine + ATP = UDP-N-acetyl-alpha-D-muramoyl-L-alanine + ADP + phosphate + H(+). Its pathway is cell wall biogenesis; peptidoglycan biosynthesis. Functionally, cell wall formation. This Brachyspira hyodysenteriae (strain ATCC 49526 / WA1) protein is UDP-N-acetylmuramate--L-alanine ligase.